The sequence spans 120 residues: Large ribosomal subunit protein uL18 (120 aa).

It belongs to the universal ribosomal protein uL18 family. As to quaternary structure, part of the 50S ribosomal subunit; part of the 5S rRNA/L5/L18/L25 subcomplex. Contacts the 5S and 23S rRNAs.

Functionally, this is one of the proteins that bind and probably mediate the attachment of the 5S RNA into the large ribosomal subunit, where it forms part of the central protuberance. This Bacillus licheniformis (strain ATCC 14580 / DSM 13 / JCM 2505 / CCUG 7422 / NBRC 12200 / NCIMB 9375 / NCTC 10341 / NRRL NRS-1264 / Gibson 46) protein is Large ribosomal subunit protein uL18.